The chain runs to 60 residues: UPF0434 protein Mfla_2088 (60 aa).

This sequence belongs to the UPF0434 family.

This chain is UPF0434 protein Mfla_2088, found in Methylobacillus flagellatus (strain ATCC 51484 / DSM 6875 / VKM B-1610 / KT).